A 471-amino-acid polypeptide reads, in one-letter code: Iroquois-class homeodomain protein IRX-2 (471 aa).

The segment at residues Leu112 to Glu175 is a DNA-binding region (homeobox; TALE-type). Disordered stretches follow at residues Asn176–Pro373 and Ala424–Leu471. Ser186 is modified (phosphoserine). Basic and acidic residues predominate over residues Asp195–Glu209. Over residues Asp261–Gly273 the composition is skewed to acidic residues. The span at Pro355 to Pro367 shows a compositional bias: low complexity. Residues Val462 to Leu471 show a composition bias toward gly residues.

This sequence belongs to the TALE/IRO homeobox family.

It is found in the nucleus. In Homo sapiens (Human), this protein is Iroquois-class homeodomain protein IRX-2 (IRX2).